The chain runs to 195 residues: Thymidylate kinase (195 aa).

Residue 7–14 (GIDGVGKS) participates in ATP binding.

This sequence belongs to the thymidylate kinase family.

It carries out the reaction dTMP + ATP = dTDP + ADP. Its function is as follows. Phosphorylation of dTMP to form dTDP in both de novo and salvage pathways of dTTP synthesis. The chain is Thymidylate kinase from Campylobacter hominis (strain ATCC BAA-381 / DSM 21671 / CCUG 45161 / LMG 19568 / NCTC 13146 / CH001A).